A 457-amino-acid polypeptide reads, in one-letter code: Streptogrisin-C (457 aa).

A signal peptide (tat-type signal) is located at residues 1-34 (MERTTLRRRALVAGTATVAVGALALAGLTGVASA). Residues 35–202 (DPAATAAPPV…ARSAEQPRAL (168 aa)) constitute a propeptide that is removed on maturation. The segment at 203–393 (ADIRGGDAYY…QAYGLTLVTS (191 aa)) is catalytic. The cysteines at positions 219 and 239 are disulfide-linked. Active-site charge relay system residues include histidine 238 and aspartate 266. Disulfide bonds link cysteine 305–cysteine 315 and cysteine 341–cysteine 368. Serine 347 functions as the Charge relay system in the catalytic mechanism. Residues 393-412 (SGGGTPTDPPTTPPTDSPGG) form a disordered region. Positions 394–413 (GGGTPTDPPTTPPTDSPGGT) are linker. Residues 399–408 (TDPPTTPPTD) show a composition bias toward pro residues. Positions 415-457 (AVGTAYAAGATVTYGGATYRCLQAHTAQPGWTPADVPALWQRV) constitute a Chitin-binding type-3 domain.

Belongs to the peptidase S1 family. As to quaternary structure, monomer. Predicted to be exported by the Tat system. The position of the signal peptide cleavage has not been experimentally proven.

Its function is as follows. Hydrolysis of proteins with specificity similar to chymotrypsin. May be specialized for the degradation of chitin-linked proteins. Has a primary specificity for large aliphatic or aromatic amino acids. This is Streptogrisin-C (sprC) from Streptomyces griseus.